The primary structure comprises 161 residues: Ragulator complex protein LAMTOR1 (161 aa).

A disordered region spans residues 1–43; the sequence is MGCCYSSENEDSDQDREERKLLLDPSSPPTKALNGAEPNYHSL. Glycine 2 carries N-myristoyl glycine lipidation. 2 S-palmitoyl cysteine lipidation sites follow: cysteine 3 and cysteine 4. Lysine 20 participates in a covalent cross-link: Glycyl lysine isopeptide (Lys-Gly) (interchain with G-Cter in ubiquitin). Phosphoserine is present on serine 27. A Glycyl lysine isopeptide (Lys-Gly) (interchain with G-Cter in ubiquitin) cross-link involves residue lysine 31. Residues serine 42 and serine 56 each carry the phosphoserine modification. A Glycyl lysine isopeptide (Lys-Gly) (interchain with G-Cter in ubiquitin) cross-link involves residue lysine 60. Serine 98 bears the Phosphoserine mark. Residues lysine 103 and lysine 104 each participate in a glycyl lysine isopeptide (Lys-Gly) (interchain with G-Cter in ubiquitin) cross-link. Residues 121 to 161 form an interaction with LAMTOR2 and LAMTOR3 region; that stretch reads SEPIPFSDLQQVSRIAAYAYSALSQIRVDAKEELVVQFGIP. A Phosphoserine modification is found at serine 141.

This sequence belongs to the LAMTOR1 family. Part of the Ragulator complex composed of LAMTOR1, LAMTOR2, LAMTOR3, LAMTOR4 and LAMTOR5. LAMTOR4 and LAMTOR5 form a heterodimer that interacts, through LAMTOR1, with a LAMTOR2, LAMTOR3 heterodimer. Interacts with LAMTOR2 and LAMTOR3; the interaction is direct. The Ragulator complex interacts with both the mTORC1 complex and heterodimers constituted of the Rag GTPases RagA/RRAGA, RagB/RRAGB, RagC/RRAGC and RagD/RRAGD; regulated by amino acid availability. The Ragulator complex interacts with SLC38A9; the probable amino acid sensor. Component of the lysosomal folliculin complex (LFC), composed of FLCN, FNIP1 (or FNIP2), RagA/RRAGA or RagB/RRAGB GDP-bound, RagC/RRAGC or RagD/RRAGD GTP-bound, and Ragulator. Associates with the lysosomal V-ATPase complex; interaction promotes the guanine nucleotide exchange factor (GEF) of the Ragulator complex. Interacts with MMP14. Interacts with CDKN1B; prevents the interaction of CDKN1B with RHOA leaving RHOA in a form accessible to activation by ARHGEF2. Interacts with PIP4P1. Post-translationally, N-terminal myristoylation and palmitoylation mediates its recruitment to lysosome membranes, thereby promoting localization of the Ragulator complex to lysosomes. N-myristoylation by NMT1 is required for palmitoylation at Cys-3 and Cys-4. May be palmitoylated by ZDHHC3. In terms of processing, ubiquitinated at Lys-60, Lys-103 and Lys-104 by UBE3A, promoting its degradation by the proteasome. Ubiquitination at Lys-20 impairs the association with the lysosomal V-ATPase complex. Deubiquitination at Lys-20 by USP32 promotes the association with the lysosomal V-ATPase complex and subsequent activation of the mTORC1 complex.

The protein resides in the lysosome membrane. The protein localises to the late endosome membrane. In terms of biological role, key component of the Ragulator complex, a multiprotein complex involved in amino acid sensing and activation of mTORC1, a signaling complex promoting cell growth in response to growth factors, energy levels, and amino acids. Activated by amino acids through a mechanism involving the lysosomal V-ATPase, the Ragulator plays a dual role for the small GTPases Rag (RagA/RRAGA, RagB/RRAGB, RagC/RRAGC and/or RagD/RRAGD): it (1) acts as a guanine nucleotide exchange factor (GEF), activating the small GTPases Rag and (2) mediates recruitment of Rag GTPases to the lysosome membrane. Activated Ragulator and Rag GTPases function as a scaffold recruiting mTORC1 to lysosomes where it is in turn activated. LAMTOR1 is directly responsible for anchoring the Ragulator complex to the lysosomal membrane. LAMTOR1 wraps around the other subunits of the Ragulator complex to hold them in place and interacts with the Rag GTPases, thereby playing a key role in the recruitment of the mTORC1 complex to lysosomes. Also involved in the control of embryonic stem cells differentiation via non-canonical RagC/RRAGC and RagD/RRAGD activation: together with FLCN, it is necessary to recruit and activate RagC/RRAGC and RagD/RRAGD at the lysosomes, and to induce exit of embryonic stem cells from pluripotency via non-canonical, mTOR-independent TFE3 inactivation. Also required for late endosomes/lysosomes biogenesis it may regulate both the recycling of receptors through endosomes and the MAPK signaling pathway through recruitment of some of its components to late endosomes. May be involved in cholesterol homeostasis regulating LDL uptake and cholesterol release from late endosomes/lysosomes. May also play a role in RHOA activation. This Homo sapiens (Human) protein is Ragulator complex protein LAMTOR1.